The primary structure comprises 251 residues: Probable inactive cytidine deaminase 4 (251 aa).

Residue 61 to 63 (NVE) participates in substrate binding. The Proton donor role is filled by glutamate 76. The CMP/dCMP-type deaminase domain maps to 136–251 (EHCSHLKCRA…VFRCHKTAEN (116 aa)).

This sequence belongs to the cytidine and deoxycytidylate deaminase family. As to quaternary structure, homodimer.

The protein is Probable inactive cytidine deaminase 4 (CDA4) of Arabidopsis thaliana (Mouse-ear cress).